Consider the following 266-residue polypeptide: ATP synthase subunit a (266 aa).

Helical transmembrane passes span 33 to 53 (FWTL…LFLA), 95 to 115 (VIAP…LMDL), 141 to 161 (DVNI…FYSI), 206 to 226 (LFGN…LLPW), and 237 to 257 (AIFH…LTIV).

This sequence belongs to the ATPase A chain family. As to quaternary structure, F-type ATPases have 2 components, CF(1) - the catalytic core - and CF(0) - the membrane proton channel. CF(1) has five subunits: alpha(3), beta(3), gamma(1), delta(1), epsilon(1). CF(0) has three main subunits: a(1), b(2) and c(9-12). The alpha and beta chains form an alternating ring which encloses part of the gamma chain. CF(1) is attached to CF(0) by a central stalk formed by the gamma and epsilon chains, while a peripheral stalk is formed by the delta and b chains.

The protein resides in the cell inner membrane. Its function is as follows. Key component of the proton channel; it plays a direct role in the translocation of protons across the membrane. In Klebsiella pneumoniae subsp. pneumoniae (strain ATCC 700721 / MGH 78578), this protein is ATP synthase subunit a.